The following is a 20-amino-acid chain: Antifreeze protein (20 aa).

In terms of processing, N-glycosylated and O-glycosylated.

It is found in the secreted. The protein resides in the extracellular space. In terms of biological role, antifreeze proteins bind to the surface of ice crystals and inhibit the growth of these crystals, this inhibition causes thermal hysteresis. Causes the shape of ice crystals to change from hexagonal to a bipyramidal shape with rugged facets. Inhibits recrystallization of ice crystals. This Antarctomyces psychrotrophicus protein is Antifreeze protein.